Here is a 173-residue protein sequence, read N- to C-terminus: Ribosome maturation factor RimP (173 aa).

The protein belongs to the RimP family.

Its subcellular location is the cytoplasm. In terms of biological role, required for maturation of 30S ribosomal subunits. This Chlorobaculum tepidum (strain ATCC 49652 / DSM 12025 / NBRC 103806 / TLS) (Chlorobium tepidum) protein is Ribosome maturation factor RimP.